Here is a 372-residue protein sequence, read N- to C-terminus: Adaptive-response sensory-kinase SasA (372 aa).

In terms of domain architecture, Histidine kinase spans 147-360 (MVAHELRTPL…CFHFTVPVWQ (214 aa)). H150 is subject to Phosphohistidine; by autocatalysis.

Homooligomerizes. Interacts with KaiC. Participates in the KaiBC complex, whose core is composed of a KaiC homohexamer and 6 KaiB.

The catalysed reaction is ATP + protein L-histidine = ADP + protein N-phospho-L-histidine.. Member of the two-component regulatory system SasA/RpaA involved in genome-wide circadian gene expression. One of several clock output pathways. Participates in the Kai clock protein complex, the main circadian regulator in cyanobacteria, via its interaction with KaiC. KaiC enhances the autophosphorylation activity of SasA, which then transfers its phosphate group to RpaA to activate it. In addition to its output function, recruits fold-shifted KaiB (KaiB(fs)) to KaiC to cooperatively form the KaiB(6):KaiC(6) complex (independent of SasA kinase activity). Required for robustness of the circadian rhythm of gene expression and is involved in clock output, also required for adaptation to light/dark cycles. The protein is Adaptive-response sensory-kinase SasA of Prochlorococcus marinus subsp. pastoris (strain CCMP1986 / NIES-2087 / MED4).